The chain runs to 623 residues: Xaa-Pro aminopeptidase 1 (623 aa).

Arg-77 contacts a peptide. Position 304 is an N6-acetyllysine (Lys-304). Position 395 (His-395) interacts with a peptide. The Mn(2+) site is built by Asp-415, Asp-426, and His-489. A peptide contacts are provided by His-489, His-498, and Glu-523. The Mn(2+) site is built by Glu-523 and Glu-537.

It belongs to the peptidase M24B family. Homodimer. The cofactor is Mn(2+). As to expression, expressed in all tissues tested, including liver, adrenal decapsular tissue, adrenal capsular tissue, corpus luteum, testis, submandibular gland, thymus, brain, cerebellum and heart. Highest levels in testis.

It is found in the cytoplasm. The catalysed reaction is Release of any N-terminal amino acid, including proline, that is linked to proline, even from a dipeptide or tripeptide.. Its activity is regulated as follows. Inhibited by inositol hexakisphosphate. Its function is as follows. Metalloaminopeptidase that catalyzes the removal of a penultimate prolyl residue from the N-termini of peptides, such as Arg-Pro-Pro. Contributes to the degradation of bradykinin. This is Xaa-Pro aminopeptidase 1 from Rattus norvegicus (Rat).